The primary structure comprises 72 residues: Translation initiation factor IF-1 (72 aa).

One can recognise an S1-like domain in the interval M1–R72.

This sequence belongs to the IF-1 family. As to quaternary structure, component of the 30S ribosomal translation pre-initiation complex which assembles on the 30S ribosome in the order IF-2 and IF-3, IF-1 and N-formylmethionyl-tRNA(fMet); mRNA recruitment can occur at any time during PIC assembly.

It localises to the cytoplasm. Its function is as follows. One of the essential components for the initiation of protein synthesis. Stabilizes the binding of IF-2 and IF-3 on the 30S subunit to which N-formylmethionyl-tRNA(fMet) subsequently binds. Helps modulate mRNA selection, yielding the 30S pre-initiation complex (PIC). Upon addition of the 50S ribosomal subunit IF-1, IF-2 and IF-3 are released leaving the mature 70S translation initiation complex. This Buchnera aphidicola subsp. Baizongia pistaciae (strain Bp) protein is Translation initiation factor IF-1.